Here is a 313-residue protein sequence, read N- to C-terminus: Ribosomal RNA small subunit methyltransferase H (313 aa).

Residues 35–37 (GGH), aspartate 55, phenylalanine 79, aspartate 101, and glutamine 108 each bind S-adenosyl-L-methionine.

Belongs to the methyltransferase superfamily. RsmH family.

It localises to the cytoplasm. It carries out the reaction cytidine(1402) in 16S rRNA + S-adenosyl-L-methionine = N(4)-methylcytidine(1402) in 16S rRNA + S-adenosyl-L-homocysteine + H(+). Specifically methylates the N4 position of cytidine in position 1402 (C1402) of 16S rRNA. The chain is Ribosomal RNA small subunit methyltransferase H from Escherichia coli O127:H6 (strain E2348/69 / EPEC).